A 2322-amino-acid polypeptide reads, in one-letter code: Protein sidekick homolog (2322 aa).

A signal peptide spans 1 to 26 (MNYRIFLLFCTTTVLWSVVSTQLVLG). Topologically, residues 27 to 2020 (KPPIFQNTGP…IPDDPFYTTW (1994 aa)) are extracellular. Ig-like C2-type domains lie at 28 to 105 (PPIF…AAIS), 217 to 319 (PSLQ…AYLT), and 324 to 397 (PVLK…ADMS). Cystine bridges form between C52/C94, C247/C301, and C345/C386. N408 is a glycosylation site (N-linked (GlcNAc...) asparagine). Ig-like C2-type domains follow at residues 450-545 (PFTS…VQVN) and 548-639 (SLIE…AMLQ). 2 cysteine pairs are disulfide-bonded: C481/C529 and C569/C623. N-linked (GlcNAc...) asparagine glycans are attached at residues N633 and N656. Fibronectin type-III domains are found at residues 646 to 752 (MPER…MPQQ), 757 to 854 (APRN…TAEG), 859 to 958 (APKN…TEED), 962 to 1056 (AVDE…VPPE), 1060 to 1155 (RPSM…TLQT), 1160 to 1255 (PSQR…TYES), 1260 to 1360 (SPRN…TLED), 1364 to 1458 (PPES…SSVR), 1464 to 1567 (APAP…TLPS), 1572 to 1672 (QPIS…VGYS), 1674 to 1774 (PKRN…LEDK), 1777 to 1873 (PVGV…SKDG), and 1908 to 2010 (QAKR…VPES). The interval 732 to 762 (SNKHGPGKPSLPSSSVTMPQQPPSAAPRNVA) is disordered. N-linked (GlcNAc...) asparagine glycosylation is found at N808, N869, N933, and N1017. Residues 1040–1049 (GDGPVEETKF) are compositionally biased toward basic and acidic residues. Positions 1040-1060 (GDGPVEETKFESGVPPELPGR) are disordered. N-linked (GlcNAc...) asparagine glycosylation is present at N1108. A disordered region spans residues 1139-1163 (GRGAPSEPSRTFETLQTNPETPSQR). Residues 1146 to 1163 (PSRTFETLQTNPETPSQR) are compositionally biased toward polar residues. N-linked (GlcNAc...) asparagine glycosylation is found at N1615, N1677, and N1864. The segment at 1916–1965 (EETENGYVSQRPRRNEIRGAKSAAQTSASSNSNRPTHPIGEWITLRPTDG) is disordered. Residues 1935–1947 (AKSAAQTSASSNS) are compositionally biased toward low complexity. Residues 2021–2041 (WFMALVAMAAFVLIVIIIAIL) traverse the membrane as a helical segment. The Cytoplasmic portion of the chain corresponds to 2042–2322 (CVTGSSAKYR…NLTAGFSSFV (281 aa)). 3 disordered regions span residues 2081-2114 (NMTR…SVLG), 2167-2254 (YVVS…ADDI), and 2276-2322 (MVRA…SSFV). Positions 2092 to 2101 (PGTTQSWLSD) are enriched in polar residues. Residues 2207 to 2223 (PSSSGGSQPQGSPQQQQ) show a composition bias toward low complexity. Residues 2227–2238 (DSFDEEDDVDDD) show a composition bias toward acidic residues. 2 stretches are compositionally biased toward polar residues: residues 2282–2302 (LTNQ…STSE) and 2310–2322 (ATPN…SSFV).

It belongs to the sidekick family.

It localises to the membrane. Functionally, cell adhesion protein. The polypeptide is Protein sidekick homolog (rig-4) (Caenorhabditis briggsae).